A 365-amino-acid polypeptide reads, in one-letter code: Chaperone protein DnaJ (365 aa).

Residues 4-70 (DYYKILGVDR…QKRRMYDQTG (67 aa)) form the J domain. The CR-type zinc-finger motif lies at 139–220 (GTEKRIKYRR…CNGTGTVVVN (82 aa)). Zn(2+) is bound by residues Cys152, Cys155, Cys168, Cys171, Cys194, Cys197, Cys208, and Cys211. CXXCXGXG motif repeat units follow at residues 152–159 (CPDCNGTG), 168–175 (CPTCNGTG), 194–201 (CQTCGGRG), and 208–215 (CPRCNGTG).

It belongs to the DnaJ family. In terms of assembly, homodimer. Zn(2+) is required as a cofactor.

It localises to the cytoplasm. Participates actively in the response to hyperosmotic and heat shock by preventing the aggregation of stress-denatured proteins and by disaggregating proteins, also in an autonomous, DnaK-independent fashion. Unfolded proteins bind initially to DnaJ; upon interaction with the DnaJ-bound protein, DnaK hydrolyzes its bound ATP, resulting in the formation of a stable complex. GrpE releases ADP from DnaK; ATP binding to DnaK triggers the release of the substrate protein, thus completing the reaction cycle. Several rounds of ATP-dependent interactions between DnaJ, DnaK and GrpE are required for fully efficient folding. Also involved, together with DnaK and GrpE, in the DNA replication of plasmids through activation of initiation proteins. This Thermoplasma acidophilum (strain ATCC 25905 / DSM 1728 / JCM 9062 / NBRC 15155 / AMRC-C165) protein is Chaperone protein DnaJ.